Reading from the N-terminus, the 312-residue chain is Ribosomal RNA small subunit methyltransferase H (312 aa).

S-adenosyl-L-methionine contacts are provided by residues 33–35 (GGH), aspartate 53, phenylalanine 80, aspartate 101, and glutamine 108.

It belongs to the methyltransferase superfamily. RsmH family.

The protein resides in the cytoplasm. The catalysed reaction is cytidine(1402) in 16S rRNA + S-adenosyl-L-methionine = N(4)-methylcytidine(1402) in 16S rRNA + S-adenosyl-L-homocysteine + H(+). In terms of biological role, specifically methylates the N4 position of cytidine in position 1402 (C1402) of 16S rRNA. The polypeptide is Ribosomal RNA small subunit methyltransferase H (Desulfosudis oleivorans (strain DSM 6200 / JCM 39069 / Hxd3) (Desulfococcus oleovorans)).